We begin with the raw amino-acid sequence, 328 residues long: tRNA-modifying protein YgfZ (328 aa).

Residues tryptophan 28 and tryptophan 190 each contribute to the folate site.

This sequence belongs to the tRNA-modifying YgfZ family.

It localises to the cytoplasm. Folate-binding protein involved in regulating the level of ATP-DnaA and in the modification of some tRNAs. It is probably a key factor in regulatory networks that act via tRNA modification, such as initiation of chromosomal replication. The sequence is that of tRNA-modifying protein YgfZ from Sodalis glossinidius (strain morsitans).